The primary structure comprises 346 residues: Histone PARylation factor 1 (346 aa).

Met1 is subject to N-acetylmethionine. Residues Lys19, Lys186, and Lys233 each carry the N6-acetyllysine modification. A PolyADP-ribosyl aspartic acid modification is found at Asp235. At Tyr238 the chain carries ADP-ribosyltyrosine. Residue Glu240 is modified to PolyADP-ribosyl glutamic acid. An interaction with PARP1 region spans residues 242–346 (PETDADLKRI…SEENIDQLAG (105 aa)). Glu284 (proton donor) is an active-site residue.

It belongs to the HPF1 family. In terms of assembly, interacts with PARP1 (via the PARP catalytic domain). Interacts with PARP2 (via the PARP catalytic domain). Interacts with core nucleosomes in a PARP1- and PARP2-dependent manner.

It localises to the chromosome. Its subcellular location is the nucleus. Functionally, cofactor for serine ADP-ribosylation that confers serine specificity on PARP1 and PARP2 and plays a key role in DNA damage response. Initiates the repair of double-strand DNA breaks: recruited to DNA damage sites by PARP1 and PARP2 and switches the amino acid specificity of PARP1 and PARP2 from aspartate or glutamate to serine residues, licensing serine ADP-ribosylation of target proteins. Serine ADP-ribosylation of target proteins, such as histones, promotes decompaction of chromatin and the recruitment of repair factors leading to the reparation of DNA strand breaks. Serine ADP-ribosylation of proteins constitutes the primary form of ADP-ribosylation of proteins in response to DNA damage. HPF1 acts by completing the active site of PARP1 and PARP2: forms a composite active site composed of residues from HPF1 and PARP1 or PARP2. While HPF1 promotes the initiation of serine ADP-ribosylation, it restricts the polymerase activity of PARP1 and PARP2 in order to limit the length of poly-ADP-ribose chains. HPF1 also promotes tyrosine ADP-ribosylation, probably by conferring tyrosine specificity on PARP1. The protein is Histone PARylation factor 1 of Mus musculus (Mouse).